We begin with the raw amino-acid sequence, 309 residues long: Taste receptor type 2 member 113 (309 aa).

Residues 1-8 lie on the Extracellular side of the membrane; it reads MVAVLQST. The chain crosses the membrane as a helical span at residues 9–29; the sequence is FAIIFSMEFIVGTLGNGFIIL. Residues 30–55 are Cytoplasmic-facing; sequence MTCIDWVRRRKISLVDQILTALAITR. The chain crosses the membrane as a helical span at residues 56–76; sequence ITLILLVFIDWWVSVLFPALH. Residues 77-101 lie on the Extracellular side of the membrane; sequence ETGKILRMYFISWTVINHCNLWLTA. A helical membrane pass occupies residues 102–122; sequence SLSIIYFLKIASFSSIIFLYL. Over 123–127 the chain is Cytoplasmic; the sequence is KFRVK. A helical membrane pass occupies residues 128–148; sequence NVVFVTLLVSLFFLFINTAIV. Residues 149–185 are Extracellular-facing; the sequence is NVYFDVCFDGVQRNVSQVSRLYNHEQICKFLSFTNPM. N-linked (GlcNAc...) asparagine glycosylation is present at Asn-162. The helical transmembrane segment at 186-206 threads the bilayer; sequence FAFIPFVTSMATFFLLIFSLW. At 207–229 the chain is on the cytoplasmic side; that stretch reads RHLKNMKHNAEGCRDVSTIVHIR. Residues 230–250 form a helical membrane-spanning segment; that stretch reads ALQTIIVSVVLYSTFFLSFFV. Topologically, residues 251–262 are extracellular; sequence KVWSSGSPERYL. A helical membrane pass occupies residues 263 to 283; it reads IFLFVWALGNAVLPAHTFVLI. The Cytoplasmic portion of the chain corresponds to 284–309; it reads WGNCRLRWASLSLMLWLRYRFKNIDV.

It belongs to the G-protein coupled receptor T2R family.

The protein resides in the membrane. In terms of biological role, putative taste receptor which may play a role in the perception of bitterness. This is Taste receptor type 2 member 113 from Rattus norvegicus (Rat).